The primary structure comprises 951 residues: Glycine dehydrogenase (decarboxylating) 1 (951 aa).

Lysine 703 is modified (N6-(pyridoxal phosphate)lysine).

This sequence belongs to the GcvP family. As to quaternary structure, the glycine cleavage system is composed of four proteins: P, T, L and H. It depends on pyridoxal 5'-phosphate as a cofactor.

The catalysed reaction is N(6)-[(R)-lipoyl]-L-lysyl-[glycine-cleavage complex H protein] + glycine + H(+) = N(6)-[(R)-S(8)-aminomethyldihydrolipoyl]-L-lysyl-[glycine-cleavage complex H protein] + CO2. In terms of biological role, the glycine cleavage system catalyzes the degradation of glycine. The P protein binds the alpha-amino group of glycine through its pyridoxal phosphate cofactor; CO(2) is released and the remaining methylamine moiety is then transferred to the lipoamide cofactor of the H protein. The chain is Glycine dehydrogenase (decarboxylating) 1 from Pseudomonas fluorescens (strain ATCC BAA-477 / NRRL B-23932 / Pf-5).